The following is a 370-amino-acid chain: Phosphate acyltransferase (370 aa).

The interval 349-370 (SAGRAGQDAPDEMAAPGRSEKR) is disordered.

This sequence belongs to the PlsX family. As to quaternary structure, homodimer. Probably interacts with PlsY.

The protein localises to the cytoplasm. It catalyses the reaction a fatty acyl-[ACP] + phosphate = an acyl phosphate + holo-[ACP]. It functions in the pathway lipid metabolism; phospholipid metabolism. Functionally, catalyzes the reversible formation of acyl-phosphate (acyl-PO(4)) from acyl-[acyl-carrier-protein] (acyl-ACP). This enzyme utilizes acyl-ACP as fatty acyl donor, but not acyl-CoA. The chain is Phosphate acyltransferase from Cereibacter sphaeroides (strain ATCC 17029 / ATH 2.4.9) (Rhodobacter sphaeroides).